Reading from the N-terminus, the 169-residue chain is Small ribosomal subunit protein uS9 (169 aa).

2 disordered regions span residues M1–P29 and M128–R169. Acidic residues predominate over residues D9–P21. The span at V150 to R169 shows a compositional bias: basic residues.

Belongs to the universal ribosomal protein uS9 family.

The polypeptide is Small ribosomal subunit protein uS9 (Thermobifida fusca (strain YX)).